The sequence spans 443 residues: Threonine/serine transporter TdcC (443 aa).

11 helical membrane passes run threonine 22 to isoleucine 42, alanine 44 to phenylalanine 64, glycine 97 to valine 117, valine 140 to methionine 160, valine 163 to isoleucine 183, isoleucine 207 to isoleucine 227, alanine 259 to serine 279, alanine 319 to leucine 339, leucine 366 to leucine 386, isoleucine 389 to isoleucine 409, and aspartate 423 to phenylalanine 443.

Belongs to the amino acid/polyamine transporter 2 family. SdaC/TdcC subfamily.

Its subcellular location is the cell inner membrane. It carries out the reaction L-threonine(in) + H(+)(in) = L-threonine(out) + H(+)(out). The catalysed reaction is L-serine(in) + H(+)(in) = L-serine(out) + H(+)(out). Involved in the import of threonine and serine into the cell, with the concomitant import of a proton (symport system). This is Threonine/serine transporter TdcC from Klebsiella pneumoniae (strain 342).